The following is a 298-amino-acid chain: Protein REVEILLE 8 (298 aa).

The disordered stretch occupies residues Met1–Glu44. An HTH myb-type domain is found at Thr38 to Gln92. A DNA-binding region (H-T-H motif) is located at residues Trp65 to Phe88. The interval Thr96–Met123 is disordered.

Its subcellular location is the nucleus. Functionally, transcriptional activator of evening element (EE)-containing clock-controlled genes. Forms a negative feedback loop with APRR5. Regulates the pattern of histone H3 acetylation of the TOC1 promoter. RVE4, RVE6 and RVE8 are components of the circadian system acting synergistically to regulate flowering time, redundantly to regulate leaf growth, and antagonistically to regulate hypocotyl elongation; their action seems independent of ZTL and HY5. This Arabidopsis thaliana (Mouse-ear cress) protein is Protein REVEILLE 8.